The following is a 390-amino-acid chain: tRNA-specific 2-thiouridylase MnmA (390 aa).

Residues 33-40 (AMSGGVDS) and M59 each bind ATP. The active-site Nucleophile is the C131. A disulfide bridge connects residues C131 and C230. Residue G155 coordinates ATP. An interaction with tRNA region spans residues 180–182 (KDQ). C230 acts as the Cysteine persulfide intermediate in catalysis.

Belongs to the MnmA/TRMU family.

It is found in the cytoplasm. The catalysed reaction is S-sulfanyl-L-cysteinyl-[protein] + uridine(34) in tRNA + AH2 + ATP = 2-thiouridine(34) in tRNA + L-cysteinyl-[protein] + A + AMP + diphosphate + H(+). Its function is as follows. Catalyzes the 2-thiolation of uridine at the wobble position (U34) of tRNA, leading to the formation of s(2)U34. This Symbiobacterium thermophilum (strain DSM 24528 / JCM 14929 / IAM 14863 / T) protein is tRNA-specific 2-thiouridylase MnmA.